A 261-amino-acid polypeptide reads, in one-letter code: tRNA pseudouridine synthase A (261 aa).

The active-site Nucleophile is the aspartate 51. Tyrosine 109 serves as a coordination point for substrate.

The protein belongs to the tRNA pseudouridine synthase TruA family. Homodimer.

It catalyses the reaction uridine(38/39/40) in tRNA = pseudouridine(38/39/40) in tRNA. Its function is as follows. Formation of pseudouridine at positions 38, 39 and 40 in the anticodon stem and loop of transfer RNAs. The chain is tRNA pseudouridine synthase A from Shewanella baltica (strain OS155 / ATCC BAA-1091).